We begin with the raw amino-acid sequence, 201 residues long: Large ribosomal subunit protein uL4 (201 aa).

The tract at residues 44-71 (RAQKTRAEVSGSGKKPWRQKGTGRARSG) is disordered.

This sequence belongs to the universal ribosomal protein uL4 family. Part of the 50S ribosomal subunit.

In terms of biological role, one of the primary rRNA binding proteins, this protein initially binds near the 5'-end of the 23S rRNA. It is important during the early stages of 50S assembly. It makes multiple contacts with different domains of the 23S rRNA in the assembled 50S subunit and ribosome. Its function is as follows. Forms part of the polypeptide exit tunnel. The polypeptide is Large ribosomal subunit protein uL4 (Photorhabdus laumondii subsp. laumondii (strain DSM 15139 / CIP 105565 / TT01) (Photorhabdus luminescens subsp. laumondii)).